A 638-amino-acid polypeptide reads, in one-letter code: Phosphomethylpyrimidine synthase (638 aa).

Residues Asn233, Met262, Tyr291, His327, 347–349 (SRG), 388–391 (DGLR), and Glu427 each bind substrate. His431 contributes to the Zn(2+) binding site. Tyr454 contacts substrate. His495 is a Zn(2+) binding site. Residues Cys575, Cys578, and Cys583 each contribute to the [4Fe-4S] cluster site.

Belongs to the ThiC family. As to quaternary structure, homodimer. Requires [4Fe-4S] cluster as cofactor.

The enzyme catalyses 5-amino-1-(5-phospho-beta-D-ribosyl)imidazole + S-adenosyl-L-methionine = 4-amino-2-methyl-5-(phosphooxymethyl)pyrimidine + CO + 5'-deoxyadenosine + formate + L-methionine + 3 H(+). The protein operates within cofactor biosynthesis; thiamine diphosphate biosynthesis. Its function is as follows. Catalyzes the synthesis of the hydroxymethylpyrimidine phosphate (HMP-P) moiety of thiamine from aminoimidazole ribotide (AIR) in a radical S-adenosyl-L-methionine (SAM)-dependent reaction. In Saccharophagus degradans (strain 2-40 / ATCC 43961 / DSM 17024), this protein is Phosphomethylpyrimidine synthase.